The sequence spans 186 residues: Golgi apparatus membrane protein-like protein ECHIDNA (186 aa).

At Met-1 the chain carries N-acetylmethionine. 3 consecutive transmembrane segments (helical) span residues 35-55 (ILSA…VLLA), 108-128 (FWWT…FSLI), and 132-152 (ADYL…IIGF).

This sequence belongs to the TVP23 family. Component of a trans-Golgi network (TGN)-localized ECH/YIP4 complex made of ECH, YIP4A and YIP4B. Interacts directly with YIP4A and YIP4B.

The protein localises to the golgi apparatus. It localises to the trans-Golgi network membrane. The protein resides in the early endosome membrane. In terms of biological role, mediates trans-Golgi-network trafficking and cell elongation. Required for keeping the appropriate balance between secretory trafficking and vacuolar targeting of a subset of proteins. The ECH/YIP4 complex is involved in the modulation of the trans-Golgi network (TGN)-mediated trafficking of some proteins and cell wall components (e.g. pectin and hemicellulose) to the cell wall in dark-grown hypocotyls and in secretory cells of the seed coat. The polypeptide is Golgi apparatus membrane protein-like protein ECHIDNA (Arabidopsis thaliana (Mouse-ear cress)).